Reading from the N-terminus, the 66-residue chain is Large ribosomal subunit protein bL35 (66 aa).

This sequence belongs to the bacterial ribosomal protein bL35 family.

The sequence is that of Large ribosomal subunit protein bL35 from Bradyrhizobium diazoefficiens (strain JCM 10833 / BCRC 13528 / IAM 13628 / NBRC 14792 / USDA 110).